The sequence spans 247 residues: 5-oxoprolinase subunit A 1 (247 aa).

The protein belongs to the LamB/PxpA family. Forms a complex composed of PxpA, PxpB and PxpC.

The catalysed reaction is 5-oxo-L-proline + ATP + 2 H2O = L-glutamate + ADP + phosphate + H(+). Its function is as follows. Catalyzes the cleavage of 5-oxoproline to form L-glutamate coupled to the hydrolysis of ATP to ADP and inorganic phosphate. In Ralstonia nicotianae (strain ATCC BAA-1114 / GMI1000) (Ralstonia solanacearum), this protein is 5-oxoprolinase subunit A 1.